The sequence spans 115 residues: Skin calcitonin gene-related peptide (115 aa).

An N-terminal signal peptide occupies residues Met1 to Ala25. Residues Ala26–Arg69 constitute a propeptide, removed in mature form by a carboxypeptidase. A disulfide bond links Cys71 and Cys76. The residue at position 106 (Phe106) is a Phenylalanine amide. Residues Gly107–Val115 constitute a propeptide, removed in mature form by an endoprotease.

In terms of tissue distribution, skin, intestine and brain.

It is found in the secreted. Functionally, CGRP induces vasodilation. It dilates a variety of vessels including the coronary, cerebral and systemic vasculature. Its abundance in the CNS also points toward a neurotransmitter or neuromodulator role. The protein is Skin calcitonin gene-related peptide of Phyllomedusa bicolor (Two-colored leaf frog).